Consider the following 395-residue polypeptide: General transcription factor IIH subunit 2-like protein (395 aa).

In terms of domain architecture, VWFA spans 60–236 (HLYVVVDGSR…HYKELLTHHL (177 aa)). At tyrosine 95 the chain carries Phosphotyrosine. The segment at 291–308 (CPQCRAKYCELPVECKIC) adopts a C4-type zinc-finger fold.

It belongs to the GTF2H2 family.

The protein resides in the nucleus. Component of the core-TFIIH basal transcription factor involved in nucleotide excision repair (NER) of DNA and, when complexed to CAK, in RNA transcription by RNA polymerase II. This chain is General transcription factor IIH subunit 2-like protein (GTF2H2C), found in Homo sapiens (Human).